The chain runs to 159 residues: Nucleotide-binding protein PSPPH_4093 (159 aa).

This sequence belongs to the YajQ family.

Functionally, nucleotide-binding protein. This is Nucleotide-binding protein PSPPH_4093 from Pseudomonas savastanoi pv. phaseolicola (strain 1448A / Race 6) (Pseudomonas syringae pv. phaseolicola (strain 1448A / Race 6)).